Consider the following 1158-residue polypeptide: ATP-dependent helicase/deoxyribonuclease subunit B (1158 aa).

An ATP-binding site is contributed by 8–15; the sequence is GRAGTGKS. [4Fe-4S] cluster contacts are provided by C791, C1112, C1115, and C1121.

This sequence belongs to the helicase family. AddB/RexB type 1 subfamily. Heterodimer of AddA and AddB. Mg(2+) is required as a cofactor. It depends on [4Fe-4S] cluster as a cofactor.

Functionally, the heterodimer acts as both an ATP-dependent DNA helicase and an ATP-dependent, dual-direction single-stranded exonuclease. Recognizes the chi site generating a DNA molecule suitable for the initiation of homologous recombination. The AddB subunit has 5' -&gt; 3' nuclease activity but not helicase activity. The protein is ATP-dependent helicase/deoxyribonuclease subunit B of Clostridium perfringens (strain ATCC 13124 / DSM 756 / JCM 1290 / NCIMB 6125 / NCTC 8237 / Type A).